The sequence spans 627 residues: Carene synthase, chloroplastic (627 aa).

The N-terminal 36 residues, 1–36 (MSVISIMPLASKPCLNKSFISSTHEPKALRRPISTV), are a transit peptide targeting the chloroplast. Residues D378, D382, and D530 each coordinate Mg(2+). Residues 378–382 (DDMYD) carry the DDXXD motif motif.

Belongs to the terpene synthase family. Tpsd subfamily. Mg(2+) serves as cofactor. It depends on Mn(2+) as a cofactor.

The protein localises to the plastid. Its subcellular location is the chloroplast. It catalyses the reaction (2E)-geranyl diphosphate = (+)-car-3-ene + diphosphate. Its pathway is terpene metabolism; oleoresin biosynthesis. Its function is as follows. Terpene synthase (TPS) involved in defensive oleoresin formation in conifers in response to insect attack or other injury. The protein is Carene synthase, chloroplastic (3CAR) of Picea glauca (White spruce).